The sequence spans 472 residues: MPIATINPATGETVKTFTPASDAEVDAAIARAYERFLDYRHSTTFAQRAQWANATADLLEAEADEVAAMMTLEMGKTLKSAKAEALKCAKGFRYYAQNAEQLLADEPADAGKVGAARAYIRYQPLGVVLAVMPWNFPLWQAVRFAAPALMAGNVGILKHASNVPQSALYLADVITRGGFPEGCFQTLLVPSSAVERILRDPRVAAATLTGSEPAGQSVAAIAGDEIKPTVLELGGSDPFIVMPSADLDEAVKTAVTARVQNNGQSCIAAKRFIVHTDIYDTFVDKFVEQMKALKVGDPTDPATDVGPLATESGRDEIAKQVDDAVAAGATLRCGGKPLDGPGWFYPPTVVTDITKDMALYTEEVFGPVASMYRAADIDEAIEIANATTFGLGSNAWTNDAAEQQRFIDDIEAGQVFINGMTVSYPELGFGGVKRSGYGRELAGLGIRAFCNAKTVWIGSSKSGDAGGGSKVE.

Residues 134-135, 158-161, and 210-211 each bind NADP(+); these read WN, KHAS, and GS. The active-site Proton acceptor is the Glu-232. Leu-233 contributes to the NADP(+) binding site. Catalysis depends on Cys-266, which acts as the Nucleophile. Glu-363 provides a ligand contact to NADP(+).

The protein belongs to the aldehyde dehydrogenase family.

It carries out the reaction succinate semialdehyde + NADP(+) + H2O = succinate + NADPH + 2 H(+). Catalyzes the NADP(+)-dependent oxidation of succinate semialdehyde to succinate. It is believed to be the main source of succinate semialdehyde dehydrogenase activity in Mycobacterium. This chain is Succinate-semialdehyde dehydrogenase [NADP(+)] (gabD1), found in Mycobacterium avium (strain 104).